A 229-amino-acid chain; its full sequence is Dephospho-CoA kinase (229 aa).

One can recognise a DPCK domain in the interval 3–203 (TVGLTGGIGS…ARRDAKATAK (201 aa)). ATP is bound at residue 11–16 (GSGKSA). The tract at residues 203–229 (KATAKAETVASGTDTAASGTDTAAPAG) is disordered.

The protein belongs to the CoaE family.

It localises to the cytoplasm. The catalysed reaction is 3'-dephospho-CoA + ATP = ADP + CoA + H(+). Its pathway is cofactor biosynthesis; coenzyme A biosynthesis; CoA from (R)-pantothenate: step 5/5. Its function is as follows. Catalyzes the phosphorylation of the 3'-hydroxyl group of dephosphocoenzyme A to form coenzyme A. The sequence is that of Dephospho-CoA kinase from Frankia casuarinae (strain DSM 45818 / CECT 9043 / HFP020203 / CcI3).